A 136-amino-acid chain; its full sequence is NLP effector protein 13 (136 aa).

Residues 1-9 (MYSWYFPKD) carry the Conserved undecapeptide motif I motif. Residues 16 to 22 (GHRHDWE) carry the Hepta-peptide GHRHDWE motif II motif.

This sequence belongs to the Necrosis inducing protein (NPP1) family.

It is found in the secreted. Secreted effector that contributes moderately to virulence during infection by P.capsici. Causes only small yellow areas at 3 days after inoculation of host C.annuum leaves; these areas expand somewhat and became necrotic at 7 days after inoculation. Leads only to chlorotic areas, without necrosis at 7 days after non-host N.benthamiana leaves infection. The chain is NLP effector protein 13 from Phytophthora capsici.